We begin with the raw amino-acid sequence, 323 residues long: tRNA dimethylallyltransferase (323 aa).

An ATP-binding site is contributed by 12 to 19; it reads GPTASGKT. 14 to 19 contributes to the substrate binding site; that stretch reads TASGKT. Interaction with substrate tRNA stretches follow at residues 37-40 and 161-165; these read DSAL and QRLVR.

Belongs to the IPP transferase family. Monomer. It depends on Mg(2+) as a cofactor.

The enzyme catalyses adenosine(37) in tRNA + dimethylallyl diphosphate = N(6)-dimethylallyladenosine(37) in tRNA + diphosphate. Functionally, catalyzes the transfer of a dimethylallyl group onto the adenine at position 37 in tRNAs that read codons beginning with uridine, leading to the formation of N6-(dimethylallyl)adenosine (i(6)A). The protein is tRNA dimethylallyltransferase of Azotobacter vinelandii (strain DJ / ATCC BAA-1303).